A 204-amino-acid chain; its full sequence is Thymidylate kinase (204 aa).

10 to 17 (GGDGAGKT) provides a ligand contact to ATP.

The protein belongs to the thymidylate kinase family.

The catalysed reaction is dTMP + ATP = dTDP + ADP. Its function is as follows. Phosphorylation of dTMP to form dTDP in both de novo and salvage pathways of dTTP synthesis. The protein is Thymidylate kinase of Cutibacterium acnes (strain DSM 16379 / KPA171202) (Propionibacterium acnes).